Consider the following 429-residue polypeptide: Glutamyl-tRNA reductase (429 aa).

Residues threonine 49–arginine 52, serine 108, glutamate 113–glutamine 115, and glutamine 119 each bind substrate. Cysteine 50 functions as the Nucleophile in the catalytic mechanism. Glycine 188–serine 193 is a binding site for NADP(+).

Belongs to the glutamyl-tRNA reductase family. In terms of assembly, homodimer.

It catalyses the reaction (S)-4-amino-5-oxopentanoate + tRNA(Glu) + NADP(+) = L-glutamyl-tRNA(Glu) + NADPH + H(+). Its pathway is porphyrin-containing compound metabolism; protoporphyrin-IX biosynthesis; 5-aminolevulinate from L-glutamyl-tRNA(Glu): step 1/2. Functionally, catalyzes the NADPH-dependent reduction of glutamyl-tRNA(Glu) to glutamate 1-semialdehyde (GSA). In Rubrobacter xylanophilus (strain DSM 9941 / JCM 11954 / NBRC 16129 / PRD-1), this protein is Glutamyl-tRNA reductase.